The chain runs to 207 residues: 3-demethoxyubiquinol 3-hydroxylase (207 aa).

The segment covering 22 to 32 (ERANPADRLAP) has biased composition (basic and acidic residues). The interval 22-41 (ERANPADRLAPETEQMNPEE) is disordered. Residues Glu56, Glu86, His89, Glu138, Glu170, and His173 each contribute to the Fe cation site.

The protein belongs to the COQ7 family. Requires Fe cation as cofactor.

The protein localises to the cell membrane. It carries out the reaction a 5-methoxy-2-methyl-3-(all-trans-polyprenyl)benzene-1,4-diol + AH2 + O2 = a 3-demethylubiquinol + A + H2O. It participates in cofactor biosynthesis; ubiquinone biosynthesis. Functionally, catalyzes the hydroxylation of 2-nonaprenyl-3-methyl-6-methoxy-1,4-benzoquinol during ubiquinone biosynthesis. The chain is 3-demethoxyubiquinol 3-hydroxylase from Cupriavidus metallidurans (strain ATCC 43123 / DSM 2839 / NBRC 102507 / CH34) (Ralstonia metallidurans).